We begin with the raw amino-acid sequence, 144 residues long: Ribosomal RNA large subunit methyltransferase H (144 aa).

Residues Leu68, Gly96, and 112–117 each bind S-adenosyl-L-methionine; that span reads FSKLTF.

It belongs to the RNA methyltransferase RlmH family. As to quaternary structure, homodimer.

It is found in the cytoplasm. The catalysed reaction is pseudouridine(1915) in 23S rRNA + S-adenosyl-L-methionine = N(3)-methylpseudouridine(1915) in 23S rRNA + S-adenosyl-L-homocysteine + H(+). Its function is as follows. Specifically methylates the pseudouridine at position 1915 (m3Psi1915) in 23S rRNA. This Mycoplasmopsis synoviae (strain 53) (Mycoplasma synoviae) protein is Ribosomal RNA large subunit methyltransferase H.